The following is a 326-amino-acid chain: AA10 family lytic polysaccharide monooxygenase C (326 aa).

Positions 1–32 are cleaved as a signal peptide; sequence MVFSNSNASVSLFRLVALVATLSHLVFTFVDA. Cu(2+)-binding residues include His33 and His118. One can recognise a Chitin-binding type-4 domain in the interval 33–200; the sequence is HGYVTFPASR…ANAFYQCLDL (168 aa). An intrachain disulfide couples Cys81 to Cys197. 4 N-linked (GlcNAc...) asparagine glycosylation sites follow: Asn206, Asn215, Asn266, and Asn303. The tract at residues 206–326 is disordered; it reads NSSSSSSSSN…KSQMRRDRQG (121 aa). Residues 207 to 281 are compositionally biased toward low complexity; sequence SSSSSSSSNS…NNGGSSGSTT (75 aa).

It belongs to the polysaccharide monooxygenase AA10 family. Cu(2+) serves as cofactor.

The protein localises to the secreted. Its function is as follows. Lytic polysaccharide monooxygenase (LPMO) that oxidatively cleaves alpha- and beta-chitin with C1 regioselectivity. Catalysis by LPMOs requires the reduction of the active-site copper from Cu(II) to Cu(I) by a reducing agent and H(2)O(2) or O(2) as a cosubstrate. Exhibits enzymatic activity on U.maydis fungal cell wall chitin and Boosts chitin hydrolysis by chitinase GH18A. The protein is AA10 family lytic polysaccharide monooxygenase C of Mycosarcoma maydis (Corn smut fungus).